A 101-amino-acid polypeptide reads, in one-letter code: Small ribosomal subunit protein uS14 (101 aa).

Belongs to the universal ribosomal protein uS14 family. As to quaternary structure, part of the 30S ribosomal subunit. Contacts proteins S3 and S10.

Its function is as follows. Binds 16S rRNA, required for the assembly of 30S particles and may also be responsible for determining the conformation of the 16S rRNA at the A site. This is Small ribosomal subunit protein uS14 from Acinetobacter baylyi (strain ATCC 33305 / BD413 / ADP1).